Consider the following 81-residue polypeptide: Photosystem I iron-sulfur center (81 aa).

4Fe-4S ferredoxin-type domains follow at residues Ser-2–Trp-31 and Ile-39–Tyr-68. [4Fe-4S] cluster contacts are provided by Cys-11, Cys-14, Cys-17, Cys-21, Cys-48, Cys-51, Cys-54, and Cys-58.

In terms of assembly, the eukaryotic PSI reaction center is composed of at least 11 subunits. [4Fe-4S] cluster is required as a cofactor.

The protein localises to the plastid. The protein resides in the chloroplast thylakoid membrane. The enzyme catalyses reduced [plastocyanin] + hnu + oxidized [2Fe-2S]-[ferredoxin] = oxidized [plastocyanin] + reduced [2Fe-2S]-[ferredoxin]. Functionally, apoprotein for the two 4Fe-4S centers FA and FB of photosystem I (PSI); essential for photochemical activity. FB is the terminal electron acceptor of PSI, donating electrons to ferredoxin. The C-terminus interacts with PsaA/B/D and helps assemble the protein into the PSI complex. Required for binding of PsaD and PsaE to PSI. PSI is a plastocyanin-ferredoxin oxidoreductase, converting photonic excitation into a charge separation, which transfers an electron from the donor P700 chlorophyll pair to the spectroscopically characterized acceptors A0, A1, FX, FA and FB in turn. This Acorus calamus (Sweet flag) protein is Photosystem I iron-sulfur center.